The following is a 159-amino-acid chain: Phosphopantetheine adenylyltransferase (159 aa).

Ser8 contributes to the substrate binding site. ATP is bound by residues 8-9 and His16; that span reads SF. Substrate is bound by residues Lys40, Leu73, and Lys87. ATP contacts are provided by residues 88–90, Glu98, and 122–128; these read GLR and YGYVSST.

The protein belongs to the bacterial CoaD family. Homohexamer. Requires Mg(2+) as cofactor.

It localises to the cytoplasm. It catalyses the reaction (R)-4'-phosphopantetheine + ATP + H(+) = 3'-dephospho-CoA + diphosphate. Its pathway is cofactor biosynthesis; coenzyme A biosynthesis; CoA from (R)-pantothenate: step 4/5. Reversibly transfers an adenylyl group from ATP to 4'-phosphopantetheine, yielding dephospho-CoA (dPCoA) and pyrophosphate. The protein is Phosphopantetheine adenylyltransferase of Corynebacterium efficiens (strain DSM 44549 / YS-314 / AJ 12310 / JCM 11189 / NBRC 100395).